Reading from the N-terminus, the 125-residue chain is Napin-3 (125 aa).

Cystine bridges form between C10/C62, C23/C51, C52/C107, and C64/C115.

It belongs to the 2S seed storage albumins family. In terms of assembly, the mature protein consists of a small and a large chain linked by disulfide bonds.

In terms of biological role, the small, basic, water-soluble napins are one of the two major kinds of storage proteins synthesized in the seed during its maturation. The chain is Napin-3 from Brassica napus (Rape).